The chain runs to 181 residues: ABC transporter E family member 3 (181 aa).

Positions 20–176 (SQIIVMLGEN…KAAFARFHNG (157 aa)) constitute an ABC transporter domain. 27-34 (GENGTGKT) is a binding site for ATP.

It belongs to the ABC transporter superfamily. ABCE family. As to expression, mostly expressed in roots and leaves, and, to a lower extent, in stems, flowers and siliques.

This Arabidopsis thaliana (Mouse-ear cress) protein is ABC transporter E family member 3 (ABCE3).